The following is a 179-amino-acid chain: Large ribosomal subunit protein uL5 (179 aa).

The protein belongs to the universal ribosomal protein uL5 family. Part of the 50S ribosomal subunit; part of the 5S rRNA/L5/L18/L25 subcomplex. Contacts the 5S rRNA and the P site tRNA. Forms a bridge to the 30S subunit in the 70S ribosome.

Its function is as follows. This is one of the proteins that bind and probably mediate the attachment of the 5S RNA into the large ribosomal subunit, where it forms part of the central protuberance. In the 70S ribosome it contacts protein S13 of the 30S subunit (bridge B1b), connecting the 2 subunits; this bridge is implicated in subunit movement. Contacts the P site tRNA; the 5S rRNA and some of its associated proteins might help stabilize positioning of ribosome-bound tRNAs. This Rickettsia africae (strain ESF-5) protein is Large ribosomal subunit protein uL5.